The sequence spans 161 residues: V-type proton ATPase subunit c (161 aa).

Residues 1–9 (MSTDLCPVY) are Lumenal-facing. The chain crosses the membrane as a helical span at residues 10–32 (APFFGVMGCTAAIVFASFGAAYG). Residues 33–54 (TAKAGVGISAMGVLRPDLIVKN) are Cytoplasmic-facing. A helical membrane pass occupies residues 55-75 (TIPVVMAGIIAIYGLVVSVLI). Topologically, residues 76-91 (SGNLKQILSLYSGFIQ) are lumenal. The chain crosses the membrane as a helical span at residues 92 to 113 (LGAGLSVGLAGLAAGFAIGIVG). Residues 114-125 (DAGVRGTAQQPR) lie on the Cytoplasmic side of the membrane. A helical transmembrane segment spans residues 126-151 (LFVAMILILIFAEVLGLYGLIVALLL). The Lumenal portion of the chain corresponds to 152-161 (NTRATDNVTC).

It belongs to the V-ATPase proteolipid subunit family. As to quaternary structure, V-ATPase is a heteromultimeric enzyme composed of a peripheral catalytic V1 complex (components A to H) attached to an integral membrane V0 proton pore complex (components: a, c, c', c'', d, e, f and VOA1). The decameric c-ring forms the proton-conducting pore, and is composed of eight proteolipid subunits c, one subunit c' and one subunit c''.

It localises to the vacuole membrane. Its function is as follows. Proton-conducting pore forming subunit of the V0 complex of vacuolar(H+)-ATPase (V-ATPase), a multisubunit enzyme composed of a peripheral complex (V1) that hydrolyzes ATP and a membrane integral complex (V0) that translocates protons. V-ATPase is responsible for acidifying and maintaining the pH of intracellular compartments. This is V-type proton ATPase subunit c from Schizosaccharomyces pombe (strain 972 / ATCC 24843) (Fission yeast).